Reading from the N-terminus, the 72-residue chain is UPF0154 protein Bcer98_2334 (72 aa).

The chain crosses the membrane as a helical span at residues 3–23 (IWSGILVGVVALLAGVALGFF).

The protein belongs to the UPF0154 family.

Its subcellular location is the cell membrane. The protein is UPF0154 protein Bcer98_2334 of Bacillus cytotoxicus (strain DSM 22905 / CIP 110041 / 391-98 / NVH 391-98).